The primary structure comprises 1151 residues: Protein kinase C-like 1 (1151 aa).

2 REM-1 domains span residues 1-67 (MSFS…KTAQ) and 106-183 (KYDC…INVD). The tract at residues 64–88 (KTAQQSQGENGSEDNERCNSKEYGF) is disordered. The C2 domain maps to 190–309 (QPNDIMDNQQ…IRKKKAGQTN (120 aa)). The residue at position 226 (S226) is a Phosphoserine. The tract at residues 306 to 331 (GQTNEQQGWVNASNINGGSSLASEEG) is disordered. 2 consecutive Phorbol-ester/DAG-type zinc fingers follow at residues 414–461 (GHHF…VTKC) and 481–531 (PHRF…PDFC). Disordered regions lie at residues 546–620 (QDTK…IIDK) and 649–669 (AQQT…SNRR). Residues 560–577 (PSAQLGSSIGTANGSDLS) are compositionally biased toward polar residues. Residues 605-620 (VGRDSPTKQHDPIIDK) are compositionally biased toward basic and acidic residues. Phosphoserine is present on S761. A disordered region spans residues 782–816 (LAPTSTHASRTTDQQSPQKSQTSTSAKHKKRAAKR). Low complexity predominate over residues 792 to 806 (TTDQQSPQKSQTSTS). Residues 807 to 816 (AKHKKRAAKR) show a composition bias toward basic residues. Positions 824–1083 (FVLLKVLGKG…ADEVMEEPFF (260 aa)) constitute a Protein kinase domain. Residues 830 to 838 (LGKGNFGKV) and K853 each bind ATP. D949 serves as the catalytic Proton acceptor. The AGC-kinase C-terminal domain occupies 1084-1151 (RNINFDDILN…FSFMPDDLDL (68 aa)).

It belongs to the protein kinase superfamily. AGC Ser/Thr protein kinase family. PKC subfamily.

It carries out the reaction L-seryl-[protein] + ATP = O-phospho-L-seryl-[protein] + ADP + H(+). The catalysed reaction is L-threonyl-[protein] + ATP = O-phospho-L-threonyl-[protein] + ADP + H(+). In terms of biological role, required for cell growth and for the G2-&gt;M transition of the cell division cycle. Mediates a protein kinase cascade; it activates BCK1 which itself activates MKK1/MKK2. The polypeptide is Protein kinase C-like 1 (PKC1) (Saccharomyces cerevisiae (strain ATCC 204508 / S288c) (Baker's yeast)).